The chain runs to 206 residues: Large ribosomal subunit protein uL4 (206 aa).

Residues 49 to 76 (QSAKTRTEVRGGGIKPWRQKGTGRARQG) form a disordered region.

It belongs to the universal ribosomal protein uL4 family. As to quaternary structure, part of the 50S ribosomal subunit.

One of the primary rRNA binding proteins, this protein initially binds near the 5'-end of the 23S rRNA. It is important during the early stages of 50S assembly. It makes multiple contacts with different domains of the 23S rRNA in the assembled 50S subunit and ribosome. Functionally, forms part of the polypeptide exit tunnel. The sequence is that of Large ribosomal subunit protein uL4 from Clostridium botulinum (strain Alaska E43 / Type E3).